Consider the following 135-residue polypeptide: Fatty acid-binding protein 5 (135 aa).

A2 carries the post-translational modification N-acetylalanine. N6-acetyllysine is present on K17. The short motif at 24-34 is the Nuclear localization signal element; it reads KELGVGIALRK. The N-eicosanoyl ethanolamine site is built by C43 and R109. C120 and C127 form a disulfide bridge. 129–131 lines the (9Z,12Z)-octadecadienoate pocket; sequence RIY. Y131 serves as a coordination point for N-eicosanoyl ethanolamine. Y131 serves as a coordination point for hexadecanoate. Position 131 is a phosphotyrosine (Y131).

It belongs to the calycin superfamily. Fatty-acid binding protein (FABP) family. Monomer. Homodimer. Keratinocytes; highly expressed in psoriatic skin. Expressed in brain gray matter.

Its subcellular location is the cytoplasm. It is found in the nucleus. It localises to the synapse. The protein localises to the postsynaptic density. The protein resides in the secreted. The catalysed reaction is hexadecanoate(out) = hexadecanoate(in). It carries out the reaction (9Z,12Z)-octadecadienoate(out) = (9Z,12Z)-octadecadienoate(in). It catalyses the reaction (9Z)-octadecenoate(out) = (9Z)-octadecenoate(in). Functionally, intracellular carrier for long-chain fatty acids and related active lipids, such as endocannabinoids, that regulate the metabolism and actions of the ligands they bind. In addition to the cytosolic transport, selectively delivers specific fatty acids from the cytosol to the nucleus, wherein they activate nuclear receptors. Delivers retinoic acid to the nuclear receptor peroxisome proliferator-activated receptor delta; which promotes proliferation and survival. May also serve as a synaptic carrier of endocannabinoid at central synapses and thus controls retrograde endocannabinoid signaling. Modulates inflammation by regulating PTGES induction via NF-kappa-B activation, and prostaglandin E2 (PGE2) biosynthesis during inflammation. May be involved in keratinocyte differentiation. This chain is Fatty acid-binding protein 5, found in Homo sapiens (Human).